Consider the following 638-residue polypeptide: 1-deoxy-D-xylulose-5-phosphate synthase (638 aa).

Thiamine diphosphate-binding positions include His79 and 120 to 122; that span reads AHS. Asp151 provides a ligand contact to Mg(2+). Thiamine diphosphate-binding positions include 152 to 153, Asn180, Tyr289, and Glu371; that span reads GA. Position 180 (Asn180) interacts with Mg(2+).

It belongs to the transketolase family. DXPS subfamily. In terms of assembly, homodimer. Requires Mg(2+) as cofactor. The cofactor is thiamine diphosphate.

The catalysed reaction is D-glyceraldehyde 3-phosphate + pyruvate + H(+) = 1-deoxy-D-xylulose 5-phosphate + CO2. Its pathway is metabolic intermediate biosynthesis; 1-deoxy-D-xylulose 5-phosphate biosynthesis; 1-deoxy-D-xylulose 5-phosphate from D-glyceraldehyde 3-phosphate and pyruvate: step 1/1. Its function is as follows. Catalyzes the acyloin condensation reaction between C atoms 2 and 3 of pyruvate and glyceraldehyde 3-phosphate to yield 1-deoxy-D-xylulose-5-phosphate (DXP). This chain is 1-deoxy-D-xylulose-5-phosphate synthase, found in Rhizobium etli (strain ATCC 51251 / DSM 11541 / JCM 21823 / NBRC 15573 / CFN 42).